The following is a 92-amino-acid chain: Probable Fe(2+)-trafficking protein (92 aa).

This sequence belongs to the Fe(2+)-trafficking protein family.

Its function is as follows. Could be a mediator in iron transactions between iron acquisition and iron-requiring processes, such as synthesis and/or repair of Fe-S clusters in biosynthetic enzymes. The protein is Probable Fe(2+)-trafficking protein of Xanthomonas oryzae pv. oryzae (strain MAFF 311018).